A 122-amino-acid polypeptide reads, in one-letter code: UPF0102 protein BARBAKC583_1042 (122 aa).

This sequence belongs to the UPF0102 family.

The protein is UPF0102 protein BARBAKC583_1042 of Bartonella bacilliformis (strain ATCC 35685 / KC583 / Herrer 020/F12,63).